Consider the following 583-residue polypeptide: Isocitrate dehydrogenase kinase/phosphatase (583 aa).

ATP-binding positions include 315 to 321 and K336; that span reads APGIRGM. D371 is an active-site residue.

The protein belongs to the AceK family.

It localises to the cytoplasm. It carries out the reaction L-seryl-[isocitrate dehydrogenase] + ATP = O-phospho-L-seryl-[isocitrate dehydrogenase] + ADP + H(+). Its function is as follows. Bifunctional enzyme which can phosphorylate or dephosphorylate isocitrate dehydrogenase (IDH) on a specific serine residue. This is a regulatory mechanism which enables bacteria to bypass the Krebs cycle via the glyoxylate shunt in response to the source of carbon. When bacteria are grown on glucose, IDH is fully active and unphosphorylated, but when grown on acetate or ethanol, the activity of IDH declines drastically concomitant with its phosphorylation. The protein is Isocitrate dehydrogenase kinase/phosphatase of Salmonella paratyphi B (strain ATCC BAA-1250 / SPB7).